The primary structure comprises 508 residues: D-alanine--D-alanyl carrier protein ligase (508 aa).

Position 152–153 (152–153 (TS)) interacts with ATP. Asp198 provides a ligand contact to D-alanine. An ATP-binding site is contributed by 293–298 (NTYGPT). Position 302 (Val302) interacts with D-alanine. ATP contacts are provided by residues Asp384, 396–399 (YRGR), and Lys495. Lys495 provides a ligand contact to D-alanine.

It belongs to the ATP-dependent AMP-binding enzyme family. DltA subfamily.

It is found in the cytoplasm. It catalyses the reaction holo-[D-alanyl-carrier protein] + D-alanine + ATP = D-alanyl-[D-alanyl-carrier protein] + AMP + diphosphate. The protein operates within cell wall biogenesis; lipoteichoic acid biosynthesis. In terms of biological role, catalyzes the first step in the D-alanylation of lipoteichoic acid (LTA), the activation of D-alanine and its transfer onto the D-alanyl carrier protein (Dcp) DltC. In an ATP-dependent two-step reaction, forms a high energy D-alanyl-AMP intermediate, followed by transfer of the D-alanyl residue as a thiol ester to the phosphopantheinyl prosthetic group of the Dcp. D-alanylation of LTA plays an important role in modulating the properties of the cell wall in Gram-positive bacteria, influencing the net charge of the cell wall. The protein is D-alanine--D-alanyl carrier protein ligase of Lactiplantibacillus plantarum (strain ATCC BAA-793 / NCIMB 8826 / WCFS1) (Lactobacillus plantarum).